We begin with the raw amino-acid sequence, 522 residues long: Probable G-protein coupled receptor egl-47 (522 aa).

7 consecutive transmembrane segments (helical) span residues 140-160 (IIKL…NSFL), 184-204 (ASMI…LSAI), 238-258 (FVFF…KVVE), 276-296 (FILV…YHLY), 345-365 (PLLL…LYFL), 398-418 (ICWA…ICST), and 472-492 (LERT…LLLF).

This sequence belongs to the G-protein coupled receptor family. In terms of tissue distribution, expressed in some neurons in the head, the HSN neurons and the PVQ interneurons of the tail.

It localises to the membrane. Its function is as follows. Orphan receptor. Regulates egg-laying probably by activating guanine nucleotide-binding protein goa-1, in the hermaphrodite-specific neurons (HSNs). The polypeptide is Probable G-protein coupled receptor egl-47 (Caenorhabditis elegans).